Consider the following 227-residue polypeptide: UPF0173 metal-dependent hydrolase Saci_1512 (227 aa).

The protein belongs to the UPF0173 family.

The chain is UPF0173 metal-dependent hydrolase Saci_1512 from Sulfolobus acidocaldarius (strain ATCC 33909 / DSM 639 / JCM 8929 / NBRC 15157 / NCIMB 11770).